The chain runs to 426 residues: Elongation factor 1-alpha (426 aa).

Residues 5–221 (KPHINLAVIG…NALKEPEKPT (217 aa)) form the tr-type G domain. Residues 14 to 21 (GHIDHGKS) form a G1 region. GTP is bound at residue 14 to 21 (GHIDHGKS). S21 is a binding site for Mg(2+). Positions 70-74 (GITID) are G2. The G3 stretch occupies residues 91 to 94 (DCPG). GTP-binding positions include 91 to 95 (DCPGH) and 146 to 149 (NKMD). The segment at 146-149 (NKMD) is G4. The segment at 185–187 (SAF) is G5.

The protein belongs to the TRAFAC class translation factor GTPase superfamily. Classic translation factor GTPase family. EF-Tu/EF-1A subfamily.

It is found in the cytoplasm. The enzyme catalyses GTP + H2O = GDP + phosphate + H(+). In terms of biological role, GTP hydrolase that promotes the GTP-dependent binding of aminoacyl-tRNA to the A-site of ribosomes during protein biosynthesis. This is Elongation factor 1-alpha from Methanocella arvoryzae (strain DSM 22066 / NBRC 105507 / MRE50).